The following is a 142-amino-acid chain: Large ribosomal subunit protein bL17 (142 aa).

This sequence belongs to the bacterial ribosomal protein bL17 family. Part of the 50S ribosomal subunit. Contacts protein L32.

The polypeptide is Large ribosomal subunit protein bL17 (Wolbachia pipientis subsp. Culex pipiens (strain wPip)).